The primary structure comprises 101 residues: Thyrotropin subunit beta (101 aa).

4 disulfides stabilise this stretch: C2–C88, C10–C66, C14–C68, and C71–C78. N6 carries N-linked (GlcNAc...) asparagine glycosylation.

Belongs to the glycoprotein hormones subunit beta family. As to quaternary structure, heterodimer of a common alpha chain and a unique beta chain which confers biological specificity to thyrotropin, lutropin, follitropin and gonadotropin.

It localises to the secreted. In terms of biological role, indispensable for the control of thyroid structure and metabolism. This is Thyrotropin subunit beta (TSHB) from Phodopus sungorus (Striped hairy-footed hamster).